The following is a 380-amino-acid chain: 1-deoxy-D-xylulose 5-phosphate reductoisomerase (380 aa).

NADPH is bound by residues Ser-10, Gly-11, Ser-12, Ile-13, Gly-36, Lys-37, Asn-38, and Asn-120. Lys-121 contacts 1-deoxy-D-xylulose 5-phosphate. Position 122 (Glu-122) interacts with NADPH. Residue Asp-146 participates in Mn(2+) binding. 4 residues coordinate 1-deoxy-D-xylulose 5-phosphate: Ser-147, Glu-148, Ser-172, and His-195. Position 148 (Glu-148) interacts with Mn(2+). Gly-201 contributes to the NADPH binding site. 1-deoxy-D-xylulose 5-phosphate-binding residues include Ser-208, Asn-213, Lys-214, and Glu-217. Glu-217 lines the Mn(2+) pocket.

This sequence belongs to the DXR family. Mg(2+) serves as cofactor. The cofactor is Mn(2+).

It carries out the reaction 2-C-methyl-D-erythritol 4-phosphate + NADP(+) = 1-deoxy-D-xylulose 5-phosphate + NADPH + H(+). It functions in the pathway isoprenoid biosynthesis; isopentenyl diphosphate biosynthesis via DXP pathway; isopentenyl diphosphate from 1-deoxy-D-xylulose 5-phosphate: step 1/6. Its function is as follows. Catalyzes the NADPH-dependent rearrangement and reduction of 1-deoxy-D-xylulose-5-phosphate (DXP) to 2-C-methyl-D-erythritol 4-phosphate (MEP). The protein is 1-deoxy-D-xylulose 5-phosphate reductoisomerase of Bacillus cereus (strain Q1).